The following is a 278-amino-acid chain: Tryptophan 2,3-dioxygenase (278 aa).

Residues 47-51 (FIIQH), tyrosine 110, and arginine 114 contribute to the substrate site. Histidine 236 provides a ligand contact to heme. Substrate is bound at residue threonine 250.

It belongs to the tryptophan 2,3-dioxygenase family. In terms of assembly, homotetramer. Heme serves as cofactor.

It catalyses the reaction L-tryptophan + O2 = N-formyl-L-kynurenine. The protein operates within amino-acid degradation; L-tryptophan degradation via kynurenine pathway; L-kynurenine from L-tryptophan: step 1/2. Its function is as follows. Heme-dependent dioxygenase that catalyzes the oxidative cleavage of the L-tryptophan (L-Trp) pyrrole ring and converts L-tryptophan to N-formyl-L-kynurenine. Catalyzes the oxidative cleavage of the indole moiety. The polypeptide is Tryptophan 2,3-dioxygenase (Ruegeria pomeroyi (strain ATCC 700808 / DSM 15171 / DSS-3) (Silicibacter pomeroyi)).